The primary structure comprises 215 residues: Outer membrane protein assembly factor BamC homolog (215 aa).

The N-terminal stretch at 1–16 (MKKIILNLVTAIILAG) is a signal peptide. A lipid anchor (N-palmitoyl cysteine) is attached at Cys17. A lipid anchor (S-diacylglycerol cysteine) is attached at Cys17.

This sequence belongs to the BamC family.

It is found in the cell outer membrane. This chain is Outer membrane protein assembly factor BamC homolog, found in Haemophilus influenzae (strain ATCC 51907 / DSM 11121 / KW20 / Rd).